The primary structure comprises 105 residues: uncharacterized protein (105 aa).

A helical transmembrane segment spans residues 25 to 47; that stretch reads AHSVTLLFGIFRSSPFLLLFLLI. The segment at 54 to 89 is disordered; sequence GRGSQRMKKKRGRANPSENLRERADPTNGPAENGKK.

The protein resides in the membrane. This is an uncharacterized protein from Saccharomyces cerevisiae (strain ATCC 204508 / S288c) (Baker's yeast).